The chain runs to 60 residues: Large ribosomal subunit protein bL33 (60 aa).

This sequence belongs to the bacterial ribosomal protein bL33 family.

This chain is Large ribosomal subunit protein bL33, found in Chlorobium phaeovibrioides (strain DSM 265 / 1930) (Prosthecochloris vibrioformis (strain DSM 265)).